Here is a 288-residue protein sequence, read N- to C-terminus: Bifunctional protein FolD (288 aa).

NADP(+) contacts are provided by residues 166-168, Ser191, and Ile232; that span reads GRS.

The protein belongs to the tetrahydrofolate dehydrogenase/cyclohydrolase family. As to quaternary structure, homodimer.

It catalyses the reaction (6R)-5,10-methylene-5,6,7,8-tetrahydrofolate + NADP(+) = (6R)-5,10-methenyltetrahydrofolate + NADPH. It carries out the reaction (6R)-5,10-methenyltetrahydrofolate + H2O = (6R)-10-formyltetrahydrofolate + H(+). It participates in one-carbon metabolism; tetrahydrofolate interconversion. Functionally, catalyzes the oxidation of 5,10-methylenetetrahydrofolate to 5,10-methenyltetrahydrofolate and then the hydrolysis of 5,10-methenyltetrahydrofolate to 10-formyltetrahydrofolate. The polypeptide is Bifunctional protein FolD (Rickettsia peacockii (strain Rustic)).